A 499-amino-acid polypeptide reads, in one-letter code: Glutamate--tRNA ligase (499 aa).

The short motif at 12-22 (PSPTGHLHIGN) is the 'HIGH' region element. Residues 259-263 (KLSKR) carry the 'KMSKS' region motif. Lys-262 contributes to the ATP binding site.

This sequence belongs to the class-I aminoacyl-tRNA synthetase family. Glutamate--tRNA ligase type 1 subfamily. Monomer.

The protein localises to the cytoplasm. The catalysed reaction is tRNA(Glu) + L-glutamate + ATP = L-glutamyl-tRNA(Glu) + AMP + diphosphate. Its function is as follows. Catalyzes the attachment of glutamate to tRNA(Glu) in a two-step reaction: glutamate is first activated by ATP to form Glu-AMP and then transferred to the acceptor end of tRNA(Glu). In Lactobacillus acidophilus (strain ATCC 700396 / NCK56 / N2 / NCFM), this protein is Glutamate--tRNA ligase.